The following is a 36-amino-acid chain: Lambda-hexatoxin-Hv1a (36 aa).

Intrachain disulfides connect Cys3/Cys17, Cys10/Cys22, Cys13/Cys14, and Cys16/Cys33.

It belongs to the neurotoxin 11 (kappa toxin) family. In terms of tissue distribution, expressed by the venom gland.

It is found in the secreted. Functionally, this excitatory toxin inhibits insect calcium-activated potassium (KCa) channels (Slo-type). The polypeptide is Lambda-hexatoxin-Hv1a (Hadronyche versuta (Blue mountains funnel-web spider)).